Reading from the N-terminus, the 177-residue chain is Large ribosomal subunit protein uL16 (177 aa).

Belongs to the universal ribosomal protein uL16 family. As to quaternary structure, part of the 50S ribosomal subunit. Weakly binds 5S rRNA. Probably binds the A and P site tRNAs.

In terms of biological role, this is 1 of 5 proteins that mediate the attachment of the 5S rRNA onto the large ribosomal subunit, stabilizing the orientation of adjacent RNA domains. Modeling places the A and P site tRNAs in close proximity to this protein. This Haloarcula marismortui (strain ATCC 43049 / DSM 3752 / JCM 8966 / VKM B-1809) (Halobacterium marismortui) protein is Large ribosomal subunit protein uL16.